Reading from the N-terminus, the 185-residue chain is Ribosome-recycling factor (185 aa).

The protein belongs to the RRF family.

It localises to the cytoplasm. Its function is as follows. Responsible for the release of ribosomes from messenger RNA at the termination of protein biosynthesis. May increase the efficiency of translation by recycling ribosomes from one round of translation to another. The chain is Ribosome-recycling factor from Myxococcus xanthus (strain DK1622).